A 276-amino-acid polypeptide reads, in one-letter code: MSLWFLVFLSVLQGVTELFPVSSLGHTLLVPALFGMHIDKHAPQLLPFLVALHLGTALALLWYFRERWIALIAGFFASLNGRKNDEGHLMWALIIGTIPTGLVGLLLEKRIERVFHDLRIVAAALIINGVLLWLGDRIQRARAHRPPEKLTFKQAFFVGLAQVGALIPGFSRSGLTMIAGNAAGLTADKAAEFSFLLGTPIIFAAGLLELPKLFHAPDQLADALLGGVLTAIAAYLSVRFLMRYFEGRGRLASFGLYCVLAGLFCLGWFMFHAQPV.

Transmembrane regions (helical) follow at residues 1–21 (MSLW…LFPV), 44–64 (QLLP…LWYF), 87–107 (GHLM…GLLL), 114–134 (VFHD…LLWL), 150–170 (LTFK…IPGF), 190–210 (AAEF…LLEL), 222–242 (DALL…RFLM), and 251–271 (LASF…WFMF).

The protein belongs to the UppP family.

The protein resides in the cell inner membrane. It carries out the reaction di-trans,octa-cis-undecaprenyl diphosphate + H2O = di-trans,octa-cis-undecaprenyl phosphate + phosphate + H(+). Its function is as follows. Catalyzes the dephosphorylation of undecaprenyl diphosphate (UPP). Confers resistance to bacitracin. This is Undecaprenyl-diphosphatase 1 from Burkholderia pseudomallei (strain 1106a).